Here is a 479-residue protein sequence, read N- to C-terminus: Probable cytosol aminopeptidase (479 aa).

The Mn(2+) site is built by Lys247 and Asp252. Residue Lys259 is part of the active site. Positions 270, 329, and 331 each coordinate Mn(2+). Residue Arg333 is part of the active site.

Belongs to the peptidase M17 family. It depends on Mn(2+) as a cofactor.

The protein resides in the cytoplasm. It carries out the reaction Release of an N-terminal amino acid, Xaa-|-Yaa-, in which Xaa is preferably Leu, but may be other amino acids including Pro although not Arg or Lys, and Yaa may be Pro. Amino acid amides and methyl esters are also readily hydrolyzed, but rates on arylamides are exceedingly low.. The enzyme catalyses Release of an N-terminal amino acid, preferentially leucine, but not glutamic or aspartic acids.. Its function is as follows. Presumably involved in the processing and regular turnover of intracellular proteins. Catalyzes the removal of unsubstituted N-terminal amino acids from various peptides. The chain is Probable cytosol aminopeptidase from Vesicomyosocius okutanii subsp. Calyptogena okutanii (strain HA).